The following is an 85-amino-acid chain: Defensin-like protein 11 (85 aa).

The signal sequence occupies residues 1-29; that stretch reads MGKTISFSAIILVFLLVSTGLMKQGDAQA. Disulfide bonds link Cys32/Cys84, Cys44/Cys68, Cys54/Cys75, and Cys58/Cys77.

This sequence belongs to the DEFL family.

The protein resides in the secreted. This is Defensin-like protein 11 from Arabidopsis thaliana (Mouse-ear cress).